Reading from the N-terminus, the 147-residue chain is Hemoglobin subunit delta (147 aa).

The 145-residue stretch at 3–147 (HLTPEEKAAV…VATALAHKYH (145 aa)) folds into the Globin domain. Positions 64 and 93 each coordinate heme b.

This sequence belongs to the globin family. As to quaternary structure, heterotetramer of two delta chains and two alpha chains. In terms of tissue distribution, red blood cells.

This is Hemoglobin subunit delta (HBD) from Ateles geoffroyi (Black-handed spider monkey).